Reading from the N-terminus, the 354-residue chain is UPF0425 pyridoxal phosphate-dependent protein MMP0002 (354 aa).

The residue at position 210 (Lys-210) is an N6-(pyridoxal phosphate)lysine.

It belongs to the UPF0425 family. It depends on pyridoxal 5'-phosphate as a cofactor.

The protein is UPF0425 pyridoxal phosphate-dependent protein MMP0002 of Methanococcus maripaludis (strain DSM 14266 / JCM 13030 / NBRC 101832 / S2 / LL).